Here is a 485-residue protein sequence, read N- to C-terminus: Acyltransferase cm3D (485 aa).

Catalysis depends on His-169, which acts as the Proton acceptor.

Belongs to the plant acyltransferase family. Monomer.

The protein operates within secondary metabolite biosynthesis. Its function is as follows. Acyltransferase; part of the gene cluster that mediates the biosynthesis of beauveriolides I and III, cyclodepsipeptides acting as inhibitors of the acyl-CoA:cholesterol acyltransferase. The HR-PKS cm3B initiates the biosynthesis of beauveriolides by iteratively catalyzing the formation of the linear polyketide chain. The ATP-dependent acetyl-CoA ligase cm3D converts the polyketide carboxylic acid to a CoA thioester which id shuttled to the first T domain in the NRPS cm3A by the acetyltransferase cm3C. Cm3A contains 13 domains and assembles the polyketide chain, L-phenylalanine, L-alanine, and D-leucine (or D-allo-isoleucine) to form beauveriolide I (or beauveriolide III). The production of both beauveriolides I and III suggests the substrate adaptability of cm3B, using different amino acids as substrates. The polypeptide is Acyltransferase cm3D (Cordyceps militaris (strain CM01) (Caterpillar fungus)).